An 85-amino-acid polypeptide reads, in one-letter code: Large ribosomal subunit protein bL27 (85 aa).

A compositionally biased stretch (polar residues) spans 1 to 13 (MAKTKSGGSTSNG). The segment at 1 to 26 (MAKTKSGGSTSNGRDSKGRRLGQKLG) is disordered.

It belongs to the bacterial ribosomal protein bL27 family.

The chain is Large ribosomal subunit protein bL27 from Mycoplasma mobile (strain ATCC 43663 / 163K / NCTC 11711) (Mesomycoplasma mobile).